The chain runs to 608 residues: Aspartate--tRNA(Asp/Asn) ligase (608 aa).

Glutamate 187 contacts L-aspartate. The segment at 211–214 is aspartate; sequence QQFK. Positions 233 and 461 each coordinate L-aspartate. 233 to 235 lines the ATP pocket; the sequence is RDE. Residue glutamate 495 participates in ATP binding. Residue arginine 502 participates in L-aspartate binding. 547–550 contacts ATP; it reads GLDR.

The protein belongs to the class-II aminoacyl-tRNA synthetase family. Type 1 subfamily. In terms of assembly, homodimer.

It localises to the cytoplasm. It catalyses the reaction tRNA(Asx) + L-aspartate + ATP = L-aspartyl-tRNA(Asx) + AMP + diphosphate. Aspartyl-tRNA synthetase with relaxed tRNA specificity since it is able to aspartylate not only its cognate tRNA(Asp) but also tRNA(Asn). Reaction proceeds in two steps: L-aspartate is first activated by ATP to form Asp-AMP and then transferred to the acceptor end of tRNA(Asp/Asn). This is Aspartate--tRNA(Asp/Asn) ligase from Chlorobium phaeobacteroides (strain BS1).